The sequence spans 726 residues: NHL repeat-containing protein 2 (726 aa).

Positions 43–200 constitute a Thioredoxin domain; sequence QKVDGWEQDL…TSIALKYYKD (158 aa). NHL repeat units follow at residues 212–254, 265–307, 335–369, 409–439, 461–505, and 518–562; these read KLYK…VWKN, NPGR…IDLE, ISSP…IWAL, FAQP…VRTV, AFGD…VDPK, and TNNV…MDLE.

As to quaternary structure, monomer. Ubiquitous. Detected in heart, kidney, muscle, brain, lung, liver and in skin fibroblasts (at protein level).

It is found in the cytoplasm. The protein localises to the cytosol. Its function is as follows. Required for normal embryonic development. This chain is NHL repeat-containing protein 2 (NHLRC2), found in Homo sapiens (Human).